Here is a 371-residue protein sequence, read N- to C-terminus: Alanine dehydrogenase (371 aa).

Substrate contacts are provided by Arg-15 and Lys-74. His-95 acts as the Proton donor/acceptor in catalysis. NAD(+)-binding positions include Ser-133, 177-178, Asp-197, Ser-219, 238-239, 266-269, Arg-279, and 298-301; these read QA, VL, IAID, and VANM. Asp-269 functions as the Proton donor/acceptor in the catalytic mechanism.

Belongs to the AlaDH/PNT family. As to quaternary structure, homohexamer. Trimer of dimer.

The enzyme catalyses L-alanine + NAD(+) + H2O = pyruvate + NH4(+) + NADH + H(+). It participates in amino-acid degradation; L-alanine degradation via dehydrogenase pathway; NH(3) and pyruvate from L-alanine: step 1/1. In terms of biological role, catalyzes the reversible reductive amination of pyruvate to L-alanine. May play a role in cell wall synthesis as L-alanine is an important constituent of the peptidoglycan layer. This is Alanine dehydrogenase (ald) from Staphylococcus saprophyticus subsp. saprophyticus (strain ATCC 15305 / DSM 20229 / NCIMB 8711 / NCTC 7292 / S-41).